The sequence spans 1158 residues: Hephaestin (1158 aa).

Residues 1 to 23 (MESGHLLWALLFMQSLWPQLTDG) form the signal peptide. Plastocyanin-like domains follow at residues 24–206 (ATRV…LITC), 218–366 (QRQD…VKSC), 370–560 (PPVD…LLVC), 570–718 (KQKG…VSQC), 731–903 (AARI…LAIC), and 911–1067 (HGGR…SRTE). The Extracellular segment spans residues 24 to 1110 (ATRVYYLGIR…PIKNVEMLAS (1087 aa)). Na(+) contacts are provided by Gly70 and Tyr73. 2 residues coordinate Cu(2+): His126 and His128. Residue His126 participates in O2 binding. The Ca(2+) site is built by Lys134, Asp152, and Asp153. Asn164 is a glycosylation site (N-linked (GlcNAc...) asparagine). Cys180 and Cys206 are oxidised to a cystine. Cu(2+) contacts are provided by His186 and His188. Residue His186 coordinates O2. Asn236 carries N-linked (GlcNAc...) asparagine glycosylation. Residue Ser265 coordinates Na(+). A disulfide bridge connects residues Cys285 and Cys366. The Cu(2+) site is built by His304, Cys347, and His352. Positions 416, 425, and 428 each coordinate Na(+). Cys534 and Cys560 are oxidised to a cystine. Asn588 is a glycosylation site (N-linked (GlcNAc...) asparagine). Residue Ser617 coordinates Na(+). Cys637 and Cys718 form a disulfide bridge. Cu(2+)-binding residues include His656, Cys699, His704, and Met709. Asn714 and Asn758 each carry an N-linked (GlcNAc...) asparagine glycan. Residues Phe769 and Gly778 each coordinate Na(+). N-linked (GlcNAc...) asparagine glycans are attached at residues Asn829 and Asn873. A disulfide bridge links Cys877 with Cys903. An N-linked (GlcNAc...) asparagine glycan is attached at Asn931. Residues His1000, His1003, His1005, His1045, Cys1046, His1047, His1051, and Met1056 each contribute to the Cu(2+) site. Positions 1003 and 1005 each coordinate O2. An O2-binding site is contributed by His1047. A helical transmembrane segment spans residues 1111–1131 (VLVAISVTLLLVVLALGGVVW). The Cytoplasmic segment spans residues 1132-1158 (YQHRQRKLRRNRRSILDDSFKLLSFKQ). 3 positions are modified to phosphoserine: Ser1145, Ser1150, and Ser1155.

The protein belongs to the multicopper oxidase family. Part of a complex composed of SLC40A1/ferroportin, TF/transferrin and HEPH/hephaestin that transfers iron from cells to transferrin. Cu cation serves as cofactor. As to expression, expressed by intestinal absorptive cells (at protein level). Also detected in breast, colon, bone trabecular cells and fibroblasts.

It is found in the basolateral cell membrane. It carries out the reaction 4 Fe(2+) + O2 + 4 H(+) = 4 Fe(3+) + 2 H2O. Plasma membrane ferroxidase that mediates the extracellular conversion of ferrous/Fe(2+) iron into its ferric/Fe(3+) form. Couples ferroportin which specifically exports ferrous/Fe(2+) iron from cells to transferrin that only binds and shuttles extracellular ferric/Fe(3+) iron throughout the body. By helping iron transfer from cells to blood mainly contributes to dietary iron absorption by the intestinal epithelium and more generally regulates iron levels in the body. This chain is Hephaestin, found in Homo sapiens (Human).